Consider the following 312-residue polypeptide: Malate dehydrogenase (312 aa).

NAD(+) is bound by residues 12-17 (GAGFTG) and Asp-36. Positions 87 and 93 each coordinate substrate. Residues Asn-100 and 123-125 (LTN) contribute to the NAD(+) site. Asn-125 is a substrate binding site. Ser-149 is modified (phosphoserine). A substrate-binding site is contributed by Arg-156. His-180 (proton acceptor) is an active-site residue.

Belongs to the LDH/MDH superfamily. MDH type 3 family.

The catalysed reaction is (S)-malate + NAD(+) = oxaloacetate + NADH + H(+). Catalyzes the reversible oxidation of malate to oxaloacetate. The polypeptide is Malate dehydrogenase (mdh) (Bacillus subtilis (strain 168)).